The primary structure comprises 334 residues: Fructose-1,6-bisphosphatase class 1 (334 aa).

Residues Glu91, Asp113, Leu115, and Asp116 each contribute to the Mg(2+) site. Substrate contacts are provided by residues Asp116–Ser119, Asn208, and Lys274. Glu280 is a binding site for Mg(2+).

The protein belongs to the FBPase class 1 family. In terms of assembly, homotetramer. Requires Mg(2+) as cofactor.

It localises to the cytoplasm. It catalyses the reaction beta-D-fructose 1,6-bisphosphate + H2O = beta-D-fructose 6-phosphate + phosphate. The protein operates within carbohydrate biosynthesis; gluconeogenesis. In Janthinobacterium sp. (strain Marseille) (Minibacterium massiliensis), this protein is Fructose-1,6-bisphosphatase class 1.